Here is a 473-residue protein sequence, read N- to C-terminus: Glycine--tRNA ligase (473 aa).

Residues arginine 101 and glutamate 172 each coordinate substrate. Residues 204–206, 214–219, 289–290, and 333–336 contribute to the ATP site; these read RNE, FRTREF, EL, and GVER. Substrate is bound at residue 219–223; that stretch reads FEQME. Residue 329–333 participates in substrate binding; the sequence is EPSVG.

This sequence belongs to the class-II aminoacyl-tRNA synthetase family. Homodimer.

Its subcellular location is the cytoplasm. It catalyses the reaction tRNA(Gly) + glycine + ATP = glycyl-tRNA(Gly) + AMP + diphosphate. Catalyzes the attachment of glycine to tRNA(Gly). This chain is Glycine--tRNA ligase, found in Ureaplasma parvum serovar 3 (strain ATCC 27815 / 27 / NCTC 11736).